The chain runs to 201 residues: Peptidyl-tRNA hydrolase (201 aa).

Y17 provides a ligand contact to tRNA. The active-site Proton acceptor is the H22. Y68, N70, and N116 together coordinate tRNA.

Belongs to the PTH family. In terms of assembly, monomer.

Its subcellular location is the cytoplasm. It carries out the reaction an N-acyl-L-alpha-aminoacyl-tRNA + H2O = an N-acyl-L-amino acid + a tRNA + H(+). Hydrolyzes ribosome-free peptidyl-tRNAs (with 1 or more amino acids incorporated), which drop off the ribosome during protein synthesis, or as a result of ribosome stalling. Functionally, catalyzes the release of premature peptidyl moieties from peptidyl-tRNA molecules trapped in stalled 50S ribosomal subunits, and thus maintains levels of free tRNAs and 50S ribosomes. This Lawsonia intracellularis (strain PHE/MN1-00) protein is Peptidyl-tRNA hydrolase.